The chain runs to 250 residues: 23S rRNA (guanosine-2'-O-)-methyltransferase RlmB (250 aa).

Residues G197, I217, and M226 each contribute to the S-adenosyl-L-methionine site.

Belongs to the class IV-like SAM-binding methyltransferase superfamily. RNA methyltransferase TrmH family. RlmB subfamily.

It is found in the cytoplasm. The catalysed reaction is guanosine(2251) in 23S rRNA + S-adenosyl-L-methionine = 2'-O-methylguanosine(2251) in 23S rRNA + S-adenosyl-L-homocysteine + H(+). Specifically methylates the ribose of guanosine 2251 in 23S rRNA. This chain is 23S rRNA (guanosine-2'-O-)-methyltransferase RlmB, found in Neisseria meningitidis serogroup B (strain ATCC BAA-335 / MC58).